The primary structure comprises 238 residues: Ribonuclease PH (238 aa).

Residues arginine 86 and 124-126 contribute to the phosphate site; that span reads GTR.

Belongs to the RNase PH family. In terms of assembly, homohexameric ring arranged as a trimer of dimers.

It catalyses the reaction tRNA(n+1) + phosphate = tRNA(n) + a ribonucleoside 5'-diphosphate. In terms of biological role, phosphorolytic 3'-5' exoribonuclease that plays an important role in tRNA 3'-end maturation. Removes nucleotide residues following the 3'-CCA terminus of tRNAs; can also add nucleotides to the ends of RNA molecules by using nucleoside diphosphates as substrates, but this may not be physiologically important. Probably plays a role in initiation of 16S rRNA degradation (leading to ribosome degradation) during starvation. The protein is Ribonuclease PH of Chromobacterium violaceum (strain ATCC 12472 / DSM 30191 / JCM 1249 / CCUG 213 / NBRC 12614 / NCIMB 9131 / NCTC 9757 / MK).